Reading from the N-terminus, the 317-residue chain is Protein KlaC (317 aa).

Its function is as follows. Belongs to the kla operon, which is associated with cryptic tellurite resistance, and IncW plasmid fertility inhibition. The polypeptide is Protein KlaC (klaC) (Escherichia coli).